A 210-amino-acid polypeptide reads, in one-letter code: Redox-sensing transcriptional repressor Rex (210 aa).

A DNA-binding region (H-T-H motif) is located at residues 17–56 (SYLHLVKKAEADKLEYISGTVIAEELELEPIQVRKDLTIT). 91–96 (GAGSLG) is an NAD(+) binding site.

This sequence belongs to the transcriptional regulatory Rex family. As to quaternary structure, homodimer.

The protein localises to the cytoplasm. Modulates transcription in response to changes in cellular NADH/NAD(+) redox state. This is Redox-sensing transcriptional repressor Rex from Treponema denticola (strain ATCC 35405 / DSM 14222 / CIP 103919 / JCM 8153 / KCTC 15104).